The primary structure comprises 427 residues: Serine hydroxymethyltransferase (427 aa).

Residues L127 and 131 to 133 contribute to the (6S)-5,6,7,8-tetrahydrofolate site; that span reads GHL. An N6-(pyridoxal phosphate)lysine modification is found at K236.

This sequence belongs to the SHMT family. As to quaternary structure, homodimer. Pyridoxal 5'-phosphate serves as cofactor.

The protein resides in the cytoplasm. It carries out the reaction (6R)-5,10-methylene-5,6,7,8-tetrahydrofolate + glycine + H2O = (6S)-5,6,7,8-tetrahydrofolate + L-serine. The protein operates within one-carbon metabolism; tetrahydrofolate interconversion. It functions in the pathway amino-acid biosynthesis; glycine biosynthesis; glycine from L-serine: step 1/1. Its function is as follows. Catalyzes the reversible interconversion of serine and glycine with tetrahydrofolate (THF) serving as the one-carbon carrier. This reaction serves as the major source of one-carbon groups required for the biosynthesis of purines, thymidylate, methionine, and other important biomolecules. Also exhibits THF-independent aldolase activity toward beta-hydroxyamino acids, producing glycine and aldehydes, via a retro-aldol mechanism. This chain is Serine hydroxymethyltransferase, found in Paramagnetospirillum magneticum (strain ATCC 700264 / AMB-1) (Magnetospirillum magneticum).